The following is a 190-amino-acid chain: Surfactant protein C (190 aa).

The propeptide occupies 1–23; that stretch reads MDVGSKEVLIENPPDYSAAPQGR. Residue Cys-28 is the site of S-palmitoyl cysteine attachment. A propeptide spanning residues 59–190 is cleaved from the precursor; sequence HMSQKHTEMV…LCGEVPLYYI (132 aa). In terms of domain architecture, BRICHOS spans 94–190; that stretch reads FSIGSTGIVV…LCGEVPLYYI (97 aa). The cysteines at positions 121 and 182 are disulfide-linked.

It is found in the secreted. Its subcellular location is the extracellular space. The protein localises to the surface film. Pulmonary surfactant associated proteins promote alveolar stability by lowering the surface tension at the air-liquid interface in the peripheral air spaces. In Neovison vison (American mink), this protein is Surfactant protein C (SFTPC).